Here is a 91-residue protein sequence, read N- to C-terminus: Bombyxin B-1 homolog (91 aa).

The first 19 residues, 1–19, serve as a signal peptide directing secretion; it reads MKVSMFVVIVLCMVAASSA. 3 disulfides stabilise this stretch: C27–C78, C39–C91, and C77–C82. Residues 49–69 constitute a propeptide, c peptide like; that stretch reads SGAQYARYGWQSPESREGARG.

This sequence belongs to the insulin family. Heterodimer of a B chain and an A chain linked by two disulfide bonds.

The protein localises to the secreted. Functionally, brain peptide responsible for activation of prothoracic glands to produce ecdysone in insects. This is Bombyxin B-1 homolog (SBXB1) from Samia cynthia (Ailanthus silkmoth).